The chain runs to 615 residues: 70 kDa neurofilament protein (615 aa).

A disordered region spans residues 1 to 31 (MSVTQKKTEISTTTTYEGESRPSSGMSGFSY). The tract at residues 1 to 99 (MSVTQKKTEI…KANREREKQD (99 aa)) is head. Residues 21-30 (RPSSGMSGFS) are compositionally biased toward polar residues. In terms of domain architecture, IF rod spans 96–449 (EKQDMRDLNE…KLLEGEESRV (354 aa)). The tract at residues 100 to 135 (MRDLNERFANYIEKVRFLEAQNKKLAGELEELKSKW) is coil 1A. The linker 1 stretch occupies residues 136-145 (GKETSAIKEM). Positions 146–284 (YETELEEARK…VHAQELKELA (139 aa)) are coil 1B. The segment at 285-303 (ALAYRDTTAENREFWRNEL) is linker 12. A coil 2 region spans residues 304 to 449 (AQAIRDIQQE…KLLEGEESRV (146 aa)). The tract at residues 450–615 (GMKQIVEQVV…ANYTQNTVYQ (166 aa)) is tail. The LTD domain maps to 499-612 (AKTTYQRTSK…EDKANYTQNT (114 aa)).

The protein belongs to the intermediate filament family.

This Doryteuthis pealeii (Longfin inshore squid) protein is 70 kDa neurofilament protein.